The sequence spans 84 residues: Small ribosomal subunit protein uS17c (84 aa).

Belongs to the universal ribosomal protein uS17 family. Part of the 30S ribosomal subunit.

Its subcellular location is the plastid. It localises to the chloroplast. In terms of biological role, one of the primary rRNA binding proteins, it binds specifically to the 5'-end of 16S ribosomal RNA. The chain is Small ribosomal subunit protein uS17c (rps17) from Trieres chinensis (Marine centric diatom).